The primary structure comprises 141 residues: Hemoglobin subunit alpha-A (141 aa).

A Globin domain is found at 1 to 141 (VLSSGDKANV…VSTVLTSKYR (141 aa)). Histidine 58 is a binding site for O2. Residue histidine 87 participates in heme b binding.

Belongs to the globin family. In terms of assembly, heterotetramer of two alpha chains and two beta chains. Red blood cells.

Functionally, involved in oxygen transport from the lung to the various peripheral tissues. The chain is Hemoglobin subunit alpha-A (HBAA) from Caretta caretta (Loggerhead sea turtle).